The chain runs to 126 residues: UPF0102 protein PMT_0624 (126 aa).

This sequence belongs to the UPF0102 family.

The protein is UPF0102 protein PMT_0624 of Prochlorococcus marinus (strain MIT 9313).